A 105-amino-acid polypeptide reads, in one-letter code: UPF0145 protein CCNA_02462 (105 aa).

Belongs to the UPF0145 family.

This chain is UPF0145 protein CCNA_02462, found in Caulobacter vibrioides (strain NA1000 / CB15N) (Caulobacter crescentus).